We begin with the raw amino-acid sequence, 423 residues long: Hemoglobinase (423 aa).

An N-terminal signal peptide occupies residues 1–18 (MFYSIFFIHILRIVLVDC). Residues 19 to 29 (NEYSEENVDDR) constitute a propeptide that is removed on maturation. Active-site residues include histidine 145 and cysteine 186. The interval 286–307 (RKKASTEHDEPPMKPKDSIPSR) is disordered. A propeptide spanning residues 286–423 (RKKASTEHDE…INGVIRKVCG (138 aa)) is cleaved from the precursor. Residues 289–305 (ASTEHDEPPMKPKDSIP) are compositionally biased toward basic and acidic residues.

It belongs to the peptidase C13 family. In terms of tissue distribution, gut.

The enzyme catalyses Hydrolysis of proteins and small molecule substrates at -Asn-|-Xaa- bonds.. This protease is used by the parasite for degradation of the host globin. In Schistosoma japonicum (Blood fluke), this protein is Hemoglobinase (HAEM).